A 699-amino-acid chain; its full sequence is Elongation factor G (699 aa).

One can recognise a tr-type G domain in the interval 8–283 (EHIRNIGICA…AVVYFLPSPI (276 aa)). Residues 17–24 (AHIDAGKT), 81–85 (DTPGH), and 135–138 (NKMD) each bind GTP.

The protein belongs to the TRAFAC class translation factor GTPase superfamily. Classic translation factor GTPase family. EF-G/EF-2 subfamily.

The protein resides in the cytoplasm. In terms of biological role, catalyzes the GTP-dependent ribosomal translocation step during translation elongation. During this step, the ribosome changes from the pre-translocational (PRE) to the post-translocational (POST) state as the newly formed A-site-bound peptidyl-tRNA and P-site-bound deacylated tRNA move to the P and E sites, respectively. Catalyzes the coordinated movement of the two tRNA molecules, the mRNA and conformational changes in the ribosome. In Rickettsia akari (strain Hartford), this protein is Elongation factor G.